A 980-amino-acid polypeptide reads, in one-letter code: Macrophage colony-stimulating factor 1 receptor (980 aa).

An N-terminal signal peptide occupies residues 1–19 (MGPRALLVLLVATAWHAQG). Residues 20-514 (VPVIQPSGPE…QLPDELLFTP (495 aa)) lie on the Extracellular side of the membrane. 5 consecutive Ig-like C2-type domains span residues 21-100 (PVIQ…IHLY), 107-197 (PWKV…KVQK), 202-297 (PATL…RVVE), 299-397 (AYLN…LTLR), and 400-499 (PEVR…WPIS). An intrachain disulfide couples Cys42 to Cys84. Asn45, Asn73, Asn94, Asn153, Asn275, Asn286, Asn302, Asn335, Asn410, Asn477, and Asn490 each carry an N-linked (GlcNAc...) asparagine glycan. 2 disulfide bridges follow: Cys127–Cys177 and Cys224–Cys278. Cys417 and Cys482 are disulfide-bonded. A helical transmembrane segment spans residues 515-535 (VLLTCMSIMALLLLLLLLLLY). The Cytoplasmic segment spans residues 536 to 980 (KYKQKPKYQV…LLQPNNYQFC (445 aa)). Residues 539–571 (QKPKYQVRWKIIESYEGNSYTFIDPTQLPYNEK) form a regulatory juxtamembrane domain region. 2 positions are modified to phosphotyrosine; by autocatalysis: Tyr543 and Tyr558. The Protein kinase domain maps to 579 to 908 (LQFGKTLGAG…PTFQQICSLL (330 aa)). Residues 585–593 (LGAGAFGKV) and Lys613 each bind ATP. 2 positions are modified to phosphotyrosine; by autocatalysis: Tyr696 and Tyr705. Ser710 is subject to Phosphoserine. The residue at position 720 (Tyr720) is a Phosphotyrosine; by autocatalysis. Residues 723–743 (MRPVSTSSSNDSFSEEDLGKE) form a disordered region. The active-site Proton acceptor is the Asp776. The segment at 794–816 (DFGLARDIMNDSNYIVKGNARLP) is activation loop. Phosphotyrosine; by autocatalysis occurs at positions 807 and 921. The interval 918-959 (VPNYTNLPSSSSSSSSSSSSCRTGSGGGSSSEPEEESSSEHL) is disordered. A compositionally biased stretch (low complexity) spans 926 to 940 (SSSSSSSSSSSSCRT). Tyr977 carries the post-translational modification Phosphotyrosine; by autocatalysis.

It belongs to the protein kinase superfamily. Tyr protein kinase family. CSF-1/PDGF receptor subfamily. In terms of assembly, monomer. Homodimer. Interacts with CSF1 and IL34. Interaction with dimeric CSF1 or IL34 leads to receptor homodimerization. Interacts with INPPL1/SHIP2 and THOC5. Interacts (tyrosine phosphorylated) with PLCG2 (via SH2 domain). Interacts (tyrosine phosphorylated) with PIK3R1 (via SH2 domain). Interacts (tyrosine phosphorylated) with FYN, YES1 and SRC (via SH2 domain). Interacts (tyrosine phosphorylated) with CBL, GRB2 and SLA2. Autophosphorylated in response to CSF1 or IL34 binding. Phosphorylation at Tyr-558 is important for normal down-regulation of signaling by ubiquitination, internalization and degradation. Phosphorylation at Tyr-558 and Tyr-807 is important for interaction with SRC family members, including FYN, YES1 and SRC, and for subsequent activation of these protein kinases. Phosphorylation at Tyr-696 and Tyr-921 is important for interaction with GRB2. Phosphorylation at Tyr-720 is important for interaction with PIK3R1. Phosphorylation at Tyr-720 and Tyr-807 is important for interaction with PLCG2. Phosphorylation at Tyr-977 is important for interaction with CBL. Dephosphorylation by PTPN2 negatively regulates downstream signaling and macrophage differentiation. Post-translationally, ubiquitinated. Becomes rapidly polyubiquitinated after autophosphorylation, leading to its degradation.

The protein localises to the cell membrane. The catalysed reaction is L-tyrosyl-[protein] + ATP = O-phospho-L-tyrosyl-[protein] + ADP + H(+). Its activity is regulated as follows. Present in an inactive conformation in the absence of bound ligand. CSF1 or IL34 binding leads to dimerization and activation by autophosphorylation on tyrosine residues. Functionally, tyrosine-protein kinase that acts as a cell-surface receptor for CSF1 and IL34 and plays an essential role in the regulation of survival, proliferation and differentiation of hematopoietic precursor cells, especially mononuclear phagocytes, such as macrophages and monocytes. Promotes the release of pro-inflammatory chemokines in response to IL34 and CSF1, and thereby plays an important role in innate immunity and in inflammatory processes. Plays an important role in the regulation of osteoclast proliferation and differentiation, the regulation of bone resorption, and is required for normal bone and tooth development. Required for normal male and female fertility, and for normal development of milk ducts and acinar structures in the mammary gland during pregnancy. Promotes reorganization of the actin cytoskeleton, regulates formation of membrane ruffles, cell adhesion and cell migration, and promotes cancer cell invasion. Activates several signaling pathways in response to ligand binding, including the ERK1/2 and the JNK pathway. Phosphorylates PIK3R1, PLCG2, GRB2, SLA2 and CBL. Activation of PLCG2 leads to the production of the cellular signaling molecules diacylglycerol and inositol 1,4,5-trisphosphate, that then lead to the activation of protein kinase C family members, especially PRKCD. Phosphorylation of PIK3R1, the regulatory subunit of phosphatidylinositol 3-kinase, leads to activation of the AKT1 signaling pathway. Activated CSF1R also mediates activation of the MAP kinases MAPK1/ERK2 and/or MAPK3/ERK1, and of the SRC family kinases SRC, FYN and YES1. Activated CSF1R transmits signals both via proteins that directly interact with phosphorylated tyrosine residues in its intracellular domain, or via adapter proteins, such as GRB2. Promotes activation of STAT family members STAT3, STAT5A and/or STAT5B. Promotes tyrosine phosphorylation of SHC1 and INPP5D/SHIP-1. Receptor signaling is down-regulated by protein phosphatases, such as INPP5D/SHIP-1, that dephosphorylate the receptor and its downstream effectors, and by rapid internalization of the activated receptor. In the central nervous system, may play a role in the development of microglia macrophages. The polypeptide is Macrophage colony-stimulating factor 1 receptor (CSF1R) (Felis catus (Cat)).